Here is a 105-residue protein sequence, read N- to C-terminus: Protein ORFg in retron Ec67 (105 aa).

The polypeptide is Protein ORFg in retron Ec67 (Escherichia coli).